The following is a 344-amino-acid chain: Membrane progestin receptor delta (344 aa).

Over 1 to 51 (MLSLKLPQLLQVHQVPRVFWEDGIMSGYRRPTSSALDCVLSSFQMTNETVN) the chain is Cytoplasmic. The chain crosses the membrane as a helical span at residues 52–72 (IWTHFLPTWYFLWRLLALAGG). At 73–83 (PGFRAEPYHWP) the chain is on the extracellular side. A helical membrane pass occupies residues 84–104 (LLVFLLPACLYPFASCCAHTF). At 105–113 (SSMSPRMRH) the chain is on the cytoplasmic side. The chain crosses the membrane as a helical span at residues 114–134 (ICYFLDYGALSLYSLGCAFPY). Topologically, residues 135–147 (AAYSMPASWLHGH) are extracellular. The helical transmembrane segment at 148 to 168 (LHQFFVPAAALNSFLCTGLSC) threads the bilayer. Residues 169 to 217 (YSRFLELESPGLSKVLRTGAFAYPFLFDNLPLFYRLGLCWGRGHGCGQE) lie on the Cytoplasmic side of the membrane. The helical transmembrane segment at 218–238 (ALSTSHGYHLFCALLTGFLFA) threads the bilayer. Residues 239–258 (SHLPERLAPGRFDYIGHSHQ) are Extracellular-facing. Residues 259 to 279 (LFHICAVLGTHFQLEAVLADM) form a helical membrane-spanning segment. At 280-292 (GSRRAWLATQEPA) the chain is on the cytoplasmic side. A helical membrane pass occupies residues 293–313 (LGLAGTVATLVLAAAGNLLII). Over 314 to 344 (AAFTATLLRAPSTCPLLQGGPLEGGTQAKQQ) the chain is Extracellular.

The protein belongs to the ADIPOR family. Homodimer. Brain specific. Highly expressed in the hypothalamus, also expressed in forebrain, amygdala, corpus callosum and spinal cord.

The protein resides in the cell membrane. In terms of biological role, plasma membrane progesterone (P4) receptor coupled to G proteins. Seems to act through a G(s) mediated pathway. Involved in neurosteroid inhibition of apoptosis. May be involved in regulating rapid P4 signaling in the nervous system. Also binds dehydroepiandrosterone (DHEA), pregnanolone, pregnenolone and allopregnanolone. The sequence is that of Membrane progestin receptor delta from Homo sapiens (Human).